A 205-amino-acid polypeptide reads, in one-letter code: Thymidine kinase (205 aa).

ATP is bound by residues 9-16 and 87-90; these read SAMNAGKS and DECQ. Glu-88 acts as the Proton acceptor in catalysis. Zn(2+) contacts are provided by Cys-145, Cys-147, Cys-182, and His-185.

It belongs to the thymidine kinase family. In terms of assembly, homotetramer.

The protein localises to the cytoplasm. The catalysed reaction is thymidine + ATP = dTMP + ADP + H(+). In Shigella dysenteriae serotype 1 (strain Sd197), this protein is Thymidine kinase.